Here is a 316-residue protein sequence, read N- to C-terminus: MNVLLDTSIFLGKFLYYFLESLYYKIIPKKKKDVTGEIVLITGAASGLGRLLAIKFASLGAILVLWDINEEGNMETCRIIKEERDAKVFAYTCDCSNRQDVYRVADQVKKEVGNVTILINNAGVVTGREFLKTPDHMVERSFLVNVMSHFWTYKAFLPAMLEANHGHLVCISSFAGIVGINELSDYCASKFAAYGFAESLHFELKLLQKSKINTTIVCPYFIKTGMFEGCSTKYPLLLPMLTQEYAAQSILNAILEEQLYLIMPRFSHVALFLKQIISTNMMMTMAEYLGMDISLASFIEREKSGEVQTKTEGKQQ.

NAD(+) is bound at residue 40–64 (LITGAASGLGRLLAIKFASLGAILV). S173 lines the substrate pocket. Catalysis depends on Y186, which acts as the Proton acceptor.

Belongs to the short-chain dehydrogenases/reductases (SDR) family.

The protein is Short-chain dehydrogenase/reductase family 16C member 6 (SDR16C6) of Bos taurus (Bovine).